We begin with the raw amino-acid sequence, 219 residues long: Uracil-DNA glycosylase (219 aa).

D61 serves as the catalytic Proton acceptor.

This sequence belongs to the uracil-DNA glycosylase (UDG) superfamily. UNG family.

The protein resides in the cytoplasm. The catalysed reaction is Hydrolyzes single-stranded DNA or mismatched double-stranded DNA and polynucleotides, releasing free uracil.. In terms of biological role, excises uracil residues from the DNA which can arise as a result of misincorporation of dUMP residues by DNA polymerase or due to deamination of cytosine. The polypeptide is Uracil-DNA glycosylase (Neisseria gonorrhoeae (strain ATCC 700825 / FA 1090)).